Here is a 259-residue protein sequence, read N- to C-terminus: Thiazole synthase (259 aa).

The active-site Schiff-base intermediate with DXP is Lys-99. 1-deoxy-D-xylulose 5-phosphate is bound by residues Gly-161, 187 to 188, and 209 to 210; these read AG and NT.

It belongs to the ThiG family. Homotetramer. Forms heterodimers with either ThiH or ThiS.

Its subcellular location is the cytoplasm. It catalyses the reaction [ThiS sulfur-carrier protein]-C-terminal-Gly-aminoethanethioate + 2-iminoacetate + 1-deoxy-D-xylulose 5-phosphate = [ThiS sulfur-carrier protein]-C-terminal Gly-Gly + 2-[(2R,5Z)-2-carboxy-4-methylthiazol-5(2H)-ylidene]ethyl phosphate + 2 H2O + H(+). Its pathway is cofactor biosynthesis; thiamine diphosphate biosynthesis. Catalyzes the rearrangement of 1-deoxy-D-xylulose 5-phosphate (DXP) to produce the thiazole phosphate moiety of thiamine. Sulfur is provided by the thiocarboxylate moiety of the carrier protein ThiS. In vitro, sulfur can be provided by H(2)S. This chain is Thiazole synthase, found in Sulfurimonas denitrificans (strain ATCC 33889 / DSM 1251) (Thiomicrospira denitrificans (strain ATCC 33889 / DSM 1251)).